Consider the following 293-residue polypeptide: MDLGKVITAMVTPIHPEKNKVCKKRIHHLVNHLIDNGSDGLVIAGTTGESPTLSHDEKMKLFRQVVETNAGRAKLIAGTGSNNTAETIAFTKEVAELGGIDAVLVVAPYYNKPNQDGLYAHFVAVAEASDLPVVIYNIPGRSVVNIEPETIIRLAKLPNIIGVKESSGNLDNISKIIAETSDDFLVYSGDDSLTLPILAVGGNGVISVASHVVGNEMQEMMQAYESGDVKKAASIHRSLLPLMNGLFSVPNPAPTKYLLNQQGISVGPVRLPLVDLNAEQGTKLQAILEGLSK.

Position 47 (Thr47) interacts with pyruvate. The active-site Proton donor/acceptor is the Tyr136. The Schiff-base intermediate with substrate role is filled by Lys164. Ile206 contributes to the pyruvate binding site.

This sequence belongs to the DapA family. As to quaternary structure, homotetramer; dimer of dimers.

It localises to the cytoplasm. It catalyses the reaction L-aspartate 4-semialdehyde + pyruvate = (2S,4S)-4-hydroxy-2,3,4,5-tetrahydrodipicolinate + H2O + H(+). It participates in amino-acid biosynthesis; L-lysine biosynthesis via DAP pathway; (S)-tetrahydrodipicolinate from L-aspartate: step 3/4. Functionally, catalyzes the condensation of (S)-aspartate-beta-semialdehyde [(S)-ASA] and pyruvate to 4-hydroxy-tetrahydrodipicolinate (HTPA). The sequence is that of 4-hydroxy-tetrahydrodipicolinate synthase from Listeria innocua serovar 6a (strain ATCC BAA-680 / CLIP 11262).